The sequence spans 208 residues: Probable very-long-chain (3R)-3-hydroxyacyl-CoA dehydratase (208 aa).

At 1 to 11 (MSKILKIQYLK) the chain is on the cytoplasmic side. A helical membrane pass occupies residues 12-35 (LYNVISCFLWMSVLLRTGLIWGIT). The Lumenal segment spans residues 36-46 (KDTAVVFHETN). A helical membrane pass occupies residues 47 to 67 (TLVRWVQTLAIAEVFHSIFGL). The Cytoplasmic portion of the chain corresponds to 68-78 (VSSSPLTTIIQ). Residues 79 to 97 (VASRLYLVWGVCYPFSYVI) traverse the membrane as a helical segment. Topologically, residues 98-102 (EGSPI) are lumenal. Residues 103-123 (YLSMIIAWSITEIIRYAFYAF) form a helical membrane-spanning segment. At 124 to 134 (NLNGDIPAFLT) the chain is on the cytoplasmic side. The chain crosses the membrane as a helical span at residues 135 to 157 (WLRYNTFLILYPIGAGSEFLLVL). Catalysis depends on residues Y145 and E152. Residues 158–171 (KSRIAAQYVWSLNK) lie on the Lumenal side of the membrane. The chain crosses the membrane as a helical span at residues 172 to 192 (LLWPILMSIYPPGLYIMYTHM). Residues 193 to 208 (LAQRRKISKRAAARRT) lie on the Cytoplasmic side of the membrane.

This sequence belongs to the very long-chain fatty acids dehydratase HACD family.

The protein resides in the endoplasmic reticulum membrane. The catalysed reaction is a very-long-chain (3R)-3-hydroxyacyl-CoA = a very-long-chain (2E)-enoyl-CoA + H2O. It participates in lipid metabolism; fatty acid biosynthesis. Catalyzes the third of the four reactions of the long-chain fatty acids elongation cycle. This endoplasmic reticulum-bound enzymatic process, allows the addition of two carbons to the chain of long- and very long-chain fatty acids/VLCFAs per cycle. This enzyme catalyzes the dehydration of the 3-hydroxyacyl-CoA intermediate into trans-2,3-enoyl-CoA, within each cycle of fatty acid elongation. Thereby, it participates in the production of VLCFAs of different chain lengths that are involved in multiple biological processes as precursors of membrane lipids and lipid mediators. This chain is Probable very-long-chain (3R)-3-hydroxyacyl-CoA dehydratase, found in Schizosaccharomyces pombe (strain 972 / ATCC 24843) (Fission yeast).